The primary structure comprises 131 residues: MSMSDPIADMLTRIRNAQGVQKASVVMPSSKLKVAIAKVLKDEGYIDDYAVQEDGGKAQLSIGLKYYAGRPVIERIERVSKPGLRVYKGRSDIPQVMNGLGVAIISTPQGLMTDRKARATGVGGEVLCYVA.

This sequence belongs to the universal ribosomal protein uS8 family. In terms of assembly, part of the 30S ribosomal subunit. Contacts proteins S5 and S12.

Functionally, one of the primary rRNA binding proteins, it binds directly to 16S rRNA central domain where it helps coordinate assembly of the platform of the 30S subunit. The sequence is that of Small ribosomal subunit protein uS8 from Cupriavidus necator (strain ATCC 17699 / DSM 428 / KCTC 22496 / NCIMB 10442 / H16 / Stanier 337) (Ralstonia eutropha).